A 603-amino-acid chain; its full sequence is DNA mismatch repair protein MutL (603 aa).

Residues 337–347 (ISKKQKEDQKS) show a composition bias toward basic and acidic residues. Positions 337 to 383 (ISKKQKEDQKSEQIQMSFEENKPVKETPTLFSKPTIPEYVPSDEDAP) are disordered.

It belongs to the DNA mismatch repair MutL/HexB family.

Functionally, this protein is involved in the repair of mismatches in DNA. It is required for dam-dependent methyl-directed DNA mismatch repair. May act as a 'molecular matchmaker', a protein that promotes the formation of a stable complex between two or more DNA-binding proteins in an ATP-dependent manner without itself being part of a final effector complex. This Listeria monocytogenes serotype 4b (strain F2365) protein is DNA mismatch repair protein MutL.